Consider the following 1621-residue polypeptide: Cilia- and flagella-associated protein 43 (1621 aa).

WD repeat units lie at residues 97–138 (GAQL…PLCS), 141–180 (DSQT…NQYQ), 293–330 (LLEG…VKLE), 334–373 (NAQE…ETYK), 377–417 (VYSR…SVSS), 464–503 (LYCV…SFQV), 634–673 (GSQL…TMAQ), and 679–721 (YHNG…SSRL). Coiled-coil stretches lie at residues 792 to 812 (IKRK…AEKE), 850 to 870 (TEEQ…VRQE), 1026 to 1046 (CRQK…IQEI), 1098 to 1118 (VEEA…ALDD), 1150 to 1177 (TEEE…YSKE), 1362 to 1389 (DEKM…FQLD), 1451 to 1514 (IFQL…QEKQ), and 1591 to 1611 (AKIQ…LRMK).

The protein belongs to the CFAP43 family.

Its subcellular location is the cytoplasm. The protein localises to the cytoskeleton. It localises to the cilium axoneme. Involved in the regulation of the beating frequency of motile cilia in multiciliated cells of the larval epidermis. The protein is Cilia- and flagella-associated protein 43 (cfap43) of Xenopus laevis (African clawed frog).